The chain runs to 412 residues: MLRYWGEIPIPSGQTNRSSFDLLPREFRLVEVHDPPLHQPSANKPKPPTMLDIPSEPCSLTIHTIQLIQHNRRLRSLIATAQTQSQQQTEGVKAEESEPLPSCPGSPPLPDDLQPLDCKNPNAPFQIRHSDPESDFYRGKGEPVTELSWHSCRQLLYQAVATILAHTGFECANESVLETLTDVAHEYCLKFTKLLRFAVDREALLGQTPFPDVMEQVFHEVGIGSVLSLQKFWQHRIKDYHTYMLQISKQLSEEYERIVNPEKATEDTKPVKIKEEPVSDITFPVSEELEADLASGDQSLPIGVLGAQSERFPSNLEVEASPQAPSAEVNASPLWNLAHVKMEPQESEEGNVSAHGVLGSDVFEEPMSGMSEAGLPQSPDDSDSSYGSHSTDSLMGSSPVFNQRCRKRMRKI.

Residues 81 to 107 are disordered; the sequence is AQTQSQQQTEGVKAEESEPLPSCPGSP. S106 is subject to Phosphoserine. Residue K269 forms a Glycyl lysine isopeptide (Lys-Gly) (interchain with G-Cter in SUMO2) linkage. Residues S321 and S332 each carry the phosphoserine modification. The disordered stretch occupies residues 364–412; the sequence is EEPMSGMSEAGLPQSPDDSDSSYGSHSTDSLMGSSPVFNQRCRKRMRKI. Residues 384-393 are compositionally biased toward low complexity; it reads SSYGSHSTDS.

In terms of assembly, component of the STAGA transcription coactivator-HAT complex, at least composed of SUPT3H, SUPT7L, GCN5L2, TAF5L, TAF6L, TADA3L, TAD1L, TAF10, TAF12 and TAF9. Post-translationally, sumoylated.

The protein resides in the nucleus. The polypeptide is STAGA complex 65 subunit gamma (Supt7l) (Mus musculus (Mouse)).